Reading from the N-terminus, the 294-residue chain is MPRPVTVIDSNVTNAVHQVMDAMQAPVYFETYIIKGKNMNHLTWEVVDSIRKNKVCLNGRVNNSLCGGARKELDLFASLVDCFNLNGQPSRHENVDIVVIRENTEGEYAGREHEVVPGVIESFQVTMTKFWSDRIAKYAFEYAHFSKRKKVTAVHNNGKYEKLADAFFLESCQEVAKMYPNITYNEIASRETRAIRRHSNSKSLWAIIANIASGVAGGSFGDDYAIFEQVGSVGNHKNPVALLFSSVMMLRHLLLPLFADRLKTAVTRVISEGKCGNSNTTTQEVVDSVIANLD.

Belongs to the isocitrate and isopropylmalate dehydrogenases family.

In terms of biological role, performs an essential role in the oxidative function of the citric acid cycle. The chain is Putative isocitrate dehydrogenase [NAD] subunit-like 4 (IDH4) from Arabidopsis thaliana (Mouse-ear cress).